A 452-amino-acid chain; its full sequence is Phosphoglucosamine mutase (452 aa).

Serine 112 acts as the Phosphoserine intermediate in catalysis. Mg(2+) is bound by residues serine 112, aspartate 251, aspartate 253, and aspartate 255. Residue serine 112 is modified to Phosphoserine.

Belongs to the phosphohexose mutase family. Mg(2+) is required as a cofactor. Post-translationally, activated by phosphorylation.

The catalysed reaction is alpha-D-glucosamine 1-phosphate = D-glucosamine 6-phosphate. Functionally, catalyzes the conversion of glucosamine-6-phosphate to glucosamine-1-phosphate. The sequence is that of Phosphoglucosamine mutase from Bordetella bronchiseptica (strain ATCC BAA-588 / NCTC 13252 / RB50) (Alcaligenes bronchisepticus).